A 426-amino-acid polypeptide reads, in one-letter code: Arrestin domain-containing protein 17 (426 aa).

A compositionally biased stretch (polar residues) spans 320 to 329 (QSAGNGSLPK). The interval 320 to 340 (QSAGNGSLPKSSIKDSPPKWD) is disordered. The segment covering 331–340 (SIKDSPPKWD) has biased composition (basic and acidic residues).

It belongs to the arrestin family. In terms of assembly, interacts with tax-6. Phosphorylated. Dephosphorylated by tax-6 in vitro. In terms of tissue distribution, expressed from the comma stage to adulthood in the nervous system, including sensory neurons and interneurons posterior to the nerve ring, dorsal and ventral nerve cords, tail ganglia and, CEP, HSN, ASK, ADL, ASH and ASJ neurons.

Its function is as follows. Involved in several behavioral responses including chemotaxis towards lysine and adaptation to repeated osmotic stress. In addition, plays a role in resuming egg-laying and locomotion after starvation. The protein is Arrestin domain-containing protein 17 of Caenorhabditis elegans.